Here is a 190-residue protein sequence, read N- to C-terminus: Peptidyl-tRNA hydrolase (190 aa).

Residue Y18 coordinates tRNA. H23 functions as the Proton acceptor in the catalytic mechanism. F65, N67, and N113 together coordinate tRNA.

The protein belongs to the PTH family. Monomer.

The protein localises to the cytoplasm. The enzyme catalyses an N-acyl-L-alpha-aminoacyl-tRNA + H2O = an N-acyl-L-amino acid + a tRNA + H(+). Hydrolyzes ribosome-free peptidyl-tRNAs (with 1 or more amino acids incorporated), which drop off the ribosome during protein synthesis, or as a result of ribosome stalling. Its function is as follows. Catalyzes the release of premature peptidyl moieties from peptidyl-tRNA molecules trapped in stalled 50S ribosomal subunits, and thus maintains levels of free tRNAs and 50S ribosomes. This chain is Peptidyl-tRNA hydrolase, found in Akkermansia muciniphila (strain ATCC BAA-835 / DSM 22959 / JCM 33894 / BCRC 81048 / CCUG 64013 / CIP 107961 / Muc).